Reading from the N-terminus, the 409-residue chain is MTKVLVLGGRFGALTAAYTLKRLVGSKADVKVINKSRFSYFRPALPHVAIGVRDVDELKVDLSEALPEKGIQFQEGTVEKIDAKSSMVYYTKPDGSMAEEEYDYVIVGIGAHLATELVKGWDKYGYSVCEPEFATKLREKLESFQGGNIAIGSGPFYQGHNPKPKVPENFVPNADSACEGPVFEMSLMLHGYFKKKGMLDKVHVTVFSPGEYLSDLSPNSRKAVASIYNQLGIKLVHNFKIKEIREHEIVDEKGNTIPADITILLPPYTGNPALKNSTPDLVDDGGFIPTDLNMVSIKYDNVYAVGDANSMTVPKLGYLAVMTGRIAAQHLANRLGVPTKVDKYYPTIMCVADNPYEGYAVSVKDDTWYGGTVSIADPAAVNHLKKELFTKYYMWTKGDMALEKFLASW.

Residues 8-12 (GGRFG), 34-35 (NK), and Cys129 each bind FAD. Catalysis depends on Cys178, which acts as the Cysteine persulfide intermediate. Residues Asn271, Asp307, and Gly317 each coordinate FAD. Cys350 functions as the Cysteine persulfide intermediate in the catalytic mechanism.

It belongs to the SQRD family. As to quaternary structure, monomer. The cofactor is FAD.

The protein resides in the membrane. The enzyme catalyses n a quinone + n hydrogen sulfide + n H(+) = polysulfur(n-2) + n a quinol. With respect to regulation, inhibited by the quinone analog 2-heptyl-4-hydroxyquinolone N-oxide (HQNO). Inactivated by iodoacetamide treatment. Inhibited by KCN. Catalyzes the oxidation of sulfides, such as hydrogen sulfide, with the help of a quinone. Has the highest activity with caldariella quinone and decylubiquinone, and lower activity with naphtoquinones. Consecutive reaction cycles lead to the accumulation of a polysulfide product on the active site Cys residues; these products are released when they exceed a critical length, typically as cyclooctasulfur. The polypeptide is Sulfide-quinone reductase (Acidianus ambivalens (Desulfurolobus ambivalens)).